The chain runs to 102 residues: uncharacterized protein (102 aa).

A helical membrane pass occupies residues 27-47 (TISLVSAGLLEEIFLLFGLTF).

The protein resides in the membrane. This is an uncharacterized protein from Saccharomyces cerevisiae (strain ATCC 204508 / S288c) (Baker's yeast).